Consider the following 314-residue polypeptide: MANSHFKHTSVLLDEAVNGLNIRENGIYIDGTFGRGGHSRLILSQLGTEGRLIAIDRDPQAIEVAKAITDPRFSIVHGPFSKLAHYTEKAGLIGKIDGVLLDLGVSSPQLDDPERGFSFMRDGPLDMRMDPTRGQSAAEWLMNATADDIAWVLKTFGEERFAKRIARAIVACNQEEPITRTKALADLIAQASPIKEKHKHPATKSFQAIRIYINSELEEIEQALEGALQVLAPQGRLSVISFHSLEDRIVKRFIRQNSRGPQVPAGLPLTEEQLKARGGRSLKSIGKMKPSEEEVADNPRARSSVLRFAEKVSE.

S-adenosyl-L-methionine contacts are provided by residues 36–38, Asp56, Phe80, Asp102, and Gln109; that span reads GGH. A disordered region spans residues 278–300; that stretch reads GGRSLKSIGKMKPSEEEVADNPR. Residues 289-300 are compositionally biased toward basic and acidic residues; it reads KPSEEEVADNPR.

It belongs to the methyltransferase superfamily. RsmH family.

It is found in the cytoplasm. It catalyses the reaction cytidine(1402) in 16S rRNA + S-adenosyl-L-methionine = N(4)-methylcytidine(1402) in 16S rRNA + S-adenosyl-L-homocysteine + H(+). Its function is as follows. Specifically methylates the N4 position of cytidine in position 1402 (C1402) of 16S rRNA. The chain is Ribosomal RNA small subunit methyltransferase H from Photorhabdus laumondii subsp. laumondii (strain DSM 15139 / CIP 105565 / TT01) (Photorhabdus luminescens subsp. laumondii).